Consider the following 533-residue polypeptide: Glycogen synthase (533 aa).

Lys-12 is a binding site for ADP-alpha-D-glucose. The segment at 497–533 is disordered; the sequence is AALARADAASGRRRRAPEQSERLRQERLARQVALASK. The span at 512–525 shows a compositional bias: basic and acidic residues; the sequence is APEQSERLRQERLA.

The protein belongs to the glycosyltransferase 1 family. Bacterial/plant glycogen synthase subfamily.

The enzyme catalyses [(1-&gt;4)-alpha-D-glucosyl](n) + ADP-alpha-D-glucose = [(1-&gt;4)-alpha-D-glucosyl](n+1) + ADP + H(+). The protein operates within glycan biosynthesis; glycogen biosynthesis. In terms of biological role, synthesizes alpha-1,4-glucan chains using ADP-glucose. The sequence is that of Glycogen synthase from Burkholderia thailandensis (strain ATCC 700388 / DSM 13276 / CCUG 48851 / CIP 106301 / E264).